An 833-amino-acid chain; its full sequence is DNA polymerase I, thermostable (833 aa).

The 5'-3' exonuclease domain occupies 173-267 (VPPERWVDFR…FKALRRRTPD (95 aa)). A polymerase region spans residues 412–833 (ERLFQNLFPR…GRDWLEAKQD (422 aa)).

This sequence belongs to the DNA polymerase type-A family.

It catalyses the reaction DNA(n) + a 2'-deoxyribonucleoside 5'-triphosphate = DNA(n+1) + diphosphate. In terms of biological role, in addition to polymerase activity, this DNA polymerase exhibits 5'-3' exonuclease activity. Unlikely to have 3'-5' exonuclease activity due to absence of a 3'-5' exonuclease domain. This is DNA polymerase I, thermostable (polA) from Thermus filiformis.